Here is a 175-residue protein sequence, read N- to C-terminus: Ribulose bisphosphate carboxylase small subunit, chloroplastic (175 aa).

A chloroplast-targeting transit peptide spans 1–46; the sequence is MAPTVMASSATSVAPFQGLKSTAGLPVSRRSNGASLGSVSNGGRIR.

The protein belongs to the RuBisCO small chain family. In terms of assembly, heterohexadecamer of 8 large and 8 small subunits.

The protein localises to the plastid. Its subcellular location is the chloroplast. Its function is as follows. RuBisCO catalyzes two reactions: the carboxylation of D-ribulose 1,5-bisphosphate, the primary event in carbon dioxide fixation, as well as the oxidative fragmentation of the pentose substrate. Both reactions occur simultaneously and in competition at the same active site. Although the small subunit is not catalytic it is essential for maximal activity. This Aegilops tauschii (Tausch's goatgrass) protein is Ribulose bisphosphate carboxylase small subunit, chloroplastic.